Reading from the N-terminus, the 234-residue chain is Putative B3 domain-containing protein At2g18810 (234 aa).

The tract at residues 55 to 88 (CKNQDPEQNPNRVASSPSLCHVKSKRPQKGVSNK) is disordered. Residues 60 to 72 (PEQNPNRVASSPS) are compositionally biased toward polar residues. The TF-B3 DNA-binding region spans 87 to 185 (NKPILDMDFL…MLFFALVLSD (99 aa)).

It is found in the nucleus. The protein is Putative B3 domain-containing protein At2g18810 of Arabidopsis thaliana (Mouse-ear cress).